A 536-amino-acid polypeptide reads, in one-letter code: Atrial natriuretic peptide receptor 3 (536 aa).

Residues 1 to 26 (MRSLLLFTFSACVLLARVLLAGGASS) form the signal peptide. A propeptide spanning residues 27-40 (GAGDTRPGSRRRAR) is cleaved from the precursor. Residues 41–478 (EALAAQKIEV…KSSGGLEESA (438 aa)) are Extracellular-facing. N81 carries N-linked (GlcNAc...) asparagine glycosylation. 3 residues coordinate chloride: S101, V130, and C131. Disulfide bonds link C103–C131 and C208–C256. 2 N-linked (GlcNAc...) asparagine glycosylation sites follow: N288 and N389. Residues 479 to 499 (VTGIVVGALLGAGLLMAFYFF) traverse the membrane as a helical segment. The Cytoplasmic segment spans residues 500 to 536 (RKKYRITIERRNQQEESNIGKHRELREDSIRSHFSVA).

The protein belongs to the ANF receptor family. As to quaternary structure, homodimer; disulfide-linked. Interacts with OSTN.

Its subcellular location is the cell membrane. Receptor for the natriuretic peptide hormones, binding with similar affinities atrial natriuretic peptide NPPA/ANP, brain natriuretic peptide NPPB/BNP, and C-type natriuretic peptide NPPC/CNP. May function as a clearance receptor for NPPA, NPPB and NPPC, regulating their local concentrations and effects. Acts as a regulator of osteoblast differentiation and bone growth by binding to its ligand osteocrin, thereby preventing binding between NPR3/NPR-C and natriuretic peptides, leading to increase cGMP production. The sequence is that of Atrial natriuretic peptide receptor 3 (Npr3) from Mus musculus (Mouse).